We begin with the raw amino-acid sequence, 132 residues long: Small ribosomal subunit protein uS19 (132 aa).

This sequence belongs to the universal ribosomal protein uS19 family.

In terms of biological role, protein S19 forms a complex with S13 that binds strongly to the 16S ribosomal RNA. The sequence is that of Small ribosomal subunit protein uS19 (rps19) from Pyrococcus abyssi (strain GE5 / Orsay).